A 148-amino-acid polypeptide reads, in one-letter code: Large ribosomal subunit protein uL15A (148 aa).

2 stretches are compositionally biased toward basic residues: residues 1 to 13 (MPTHVSKTRKLRG) and 21 to 31 (RIGKHRKHPGG). A disordered region spans residues 1 to 36 (MPTHVSKTRKLRGHVSAGHGRIGKHRKHPGGRGKAG).

It belongs to the universal ribosomal protein uL15 family. Component of the large ribosomal subunit (LSU). Mature yeast ribosomes consist of a small (40S) and a large (60S) subunit. The 40S small subunit contains 1 molecule of ribosomal RNA (18S rRNA) and at least 33 different proteins. The large 60S subunit contains 3 rRNA molecules (25S, 5.8S and 5S rRNA) and at least 46 different proteins.

It is found in the cytoplasm. In terms of biological role, component of the ribosome, a large ribonucleoprotein complex responsible for the synthesis of proteins in the cell. The small ribosomal subunit (SSU) binds messenger RNAs (mRNAs) and translates the encoded message by selecting cognate aminoacyl-transfer RNA (tRNA) molecules. The large subunit (LSU) contains the ribosomal catalytic site termed the peptidyl transferase center (PTC), which catalyzes the formation of peptide bonds, thereby polymerizing the amino acids delivered by tRNAs into a polypeptide chain. The nascent polypeptides leave the ribosome through a tunnel in the LSU and interact with protein factors that function in enzymatic processing, targeting, and the membrane insertion of nascent chains at the exit of the ribosomal tunnel. The protein is Large ribosomal subunit protein uL15A (rpl2802) of Schizosaccharomyces pombe (strain 972 / ATCC 24843) (Fission yeast).